The following is a 188-amino-acid chain: Threonylcarbamoyl-AMP synthase (188 aa).

One can recognise a YrdC-like domain in the interval Gln-3–Gln-188.

The protein belongs to the SUA5 family. TsaC subfamily.

It localises to the cytoplasm. The enzyme catalyses L-threonine + hydrogencarbonate + ATP = L-threonylcarbamoyladenylate + diphosphate + H2O. Its function is as follows. Required for the formation of a threonylcarbamoyl group on adenosine at position 37 (t(6)A37) in tRNAs that read codons beginning with adenine. Catalyzes the conversion of L-threonine, HCO(3)(-)/CO(2) and ATP to give threonylcarbamoyl-AMP (TC-AMP) as the acyladenylate intermediate, with the release of diphosphate. The chain is Threonylcarbamoyl-AMP synthase from Shewanella sp. (strain MR-4).